A 312-amino-acid chain; its full sequence is Aspartate carbamoyltransferase catalytic subunit (312 aa).

Carbamoyl phosphate-binding residues include arginine 58 and threonine 59. Residue lysine 86 participates in L-aspartate binding. Positions 108, 136, and 139 each coordinate carbamoyl phosphate. Residues arginine 169 and arginine 223 each coordinate L-aspartate. The carbamoyl phosphate site is built by glycine 264 and proline 265.

The protein belongs to the aspartate/ornithine carbamoyltransferase superfamily. ATCase family. Heterododecamer (2C3:3R2) of six catalytic PyrB chains organized as two trimers (C3), and six regulatory PyrI chains organized as three dimers (R2).

The enzyme catalyses carbamoyl phosphate + L-aspartate = N-carbamoyl-L-aspartate + phosphate + H(+). The protein operates within pyrimidine metabolism; UMP biosynthesis via de novo pathway; (S)-dihydroorotate from bicarbonate: step 2/3. Catalyzes the condensation of carbamoyl phosphate and aspartate to form carbamoyl aspartate and inorganic phosphate, the committed step in the de novo pyrimidine nucleotide biosynthesis pathway. In Acetivibrio thermocellus (strain ATCC 27405 / DSM 1237 / JCM 9322 / NBRC 103400 / NCIMB 10682 / NRRL B-4536 / VPI 7372) (Clostridium thermocellum), this protein is Aspartate carbamoyltransferase catalytic subunit.